The following is a 152-amino-acid chain: Allergen Asp f 15 (152 aa).

Positions 1 to 19 (MKFTTPISLISLFVSSALA) are cleaved as a signal peptide. Cystine bridges form between C53–C90 and C93–C148.

This sequence belongs to the cerato-platanin family.

Its subcellular location is the secreted. This is Allergen Asp f 15 from Aspergillus fumigatus (strain ATCC MYA-4609 / CBS 101355 / FGSC A1100 / Af293) (Neosartorya fumigata).